The primary structure comprises 162 residues: NADH-quinone oxidoreductase subunit I (162 aa).

4Fe-4S ferredoxin-type domains follow at residues 52–82 and 93–122; these read LRRY…IEAG and TRYD…EGPN. The [4Fe-4S] cluster site is built by Cys-62, Cys-65, Cys-68, Cys-72, Cys-102, Cys-105, Cys-108, and Cys-112.

This sequence belongs to the complex I 23 kDa subunit family. NDH-1 is composed of 14 different subunits. Subunits NuoA, H, J, K, L, M, N constitute the membrane sector of the complex. The cofactor is [4Fe-4S] cluster.

Its subcellular location is the cell inner membrane. The enzyme catalyses a quinone + NADH + 5 H(+)(in) = a quinol + NAD(+) + 4 H(+)(out). Functionally, NDH-1 shuttles electrons from NADH, via FMN and iron-sulfur (Fe-S) centers, to quinones in the respiratory chain. The immediate electron acceptor for the enzyme in this species is believed to be ubiquinone. Couples the redox reaction to proton translocation (for every two electrons transferred, four hydrogen ions are translocated across the cytoplasmic membrane), and thus conserves the redox energy in a proton gradient. The protein is NADH-quinone oxidoreductase subunit I of Methylobacterium nodulans (strain LMG 21967 / CNCM I-2342 / ORS 2060).